The chain runs to 627 residues: KSKICQRLDSFPVNRFNIADNTPPTLDFKPFRGKLLNASESGPVSAEKQLELRLCDLILDIEDRIYQGTLGAVKVPDRQLWRSALENNTLELLNDEAKENGSSKPINHEMEEMEIDIKQSAKDRLLGLKNDTPSATSTSTNTPQPVNNAVRYLARALHQIEQGVERKYLKAPLGDASESGRVQRTVLDRCGESLLSSGSFSQIFLHLSTLDRSILWSRSILNARCKVCRKKGDGESMVLCDGCDRGHHIYCVRPKLKYVPEGDWFCPECHPKQRSHRLPSRHRYSMDSDEEEEEELDQKEEEEEEEEQEELSESENEQEDEMSEEESPPKRGRAKVQLPLKMRGGKATGKLGPKPKTGKQSTPKNTQPAPEGRGQGKKTRSAPSLEPTSRLSASDSPAHGVSPNSSLVNVVTVNGRGRGKGKGRGRGRGRLQKSADNTPASSPFAFRPFSLDSNEPTPPGRKPRSQSLLPSQAEPKGKGKKRLSGDISSLEQGNRRSSGRHHGVHELSACEQLVVELVRHDDSWPFMRLVSKNQVPDYFDVIQRPIALNLIREKVNKCEYKCASEFIDDVHLMWSNCFEYNHHNSNEAKAGIRLQSFFITEAQNLGLEVSPNNRAPAKTPPAKRSRF.

Residues 222–272 (NARCKVCRKKGDGESMVLCDGCDRGHHIYCVRPKLKYVPEGDWFCPECHPK) form a PHD-type zinc finger. A disordered region spans residues 270–503 (HPKQRSHRLP…NRRSSGRHHG (234 aa)). A compositionally biased stretch (basic residues) spans 272–283 (KQRSHRLPSRHR). Residues 281–327 (RHRYSMDSDEEEEEELDQKEEEEEEEEQEELSESENEQEDEMSEEES) are a coiled coil. Residues 287–326 (DSDEEEEEELDQKEEEEEEEEQEELSESENEQEDEMSEEE) show a composition bias toward acidic residues. Positions 348 to 359 (TGKLGPKPKTGK) are enriched in low complexity. 2 stretches are compositionally biased toward polar residues: residues 386-395 (EPTSRLSASD) and 402-412 (SPNSSLVNVVT). A compositionally biased stretch (basic residues) spans 417-431 (GRGKGKGRGRGRGRL). Positions 486–496 (DISSLEQGNRR) are enriched in polar residues. The Bromo domain occupies 502–605 (HGVHELSACE…SFFITEAQNL (104 aa)).

It belongs to the WAL family. In terms of assembly, together with p18 and p20 proteins, it forms the Xenopus version of CHRAC. Phosphorylated in mitosis.

Its subcellular location is the nucleus. Its function is as follows. Regulatory subunit of a chromatin remodeling complex, which forms ordered nucleosome arrays on chromatin and slides edge- and center-positioned histone octamers away from their original location on the DNA template to facilitate access to DNA during DNA-templated processes such as DNA replication, transcription, and repair. Involved in regulating the spacing of nucleosomes along the chromatin and have the ability to slide mononucleosomes to the center of a DNA template in an ATP-dependent manner. May play a role in transcriptional regulation. The protein is Bromodomain adjacent to zinc finger domain protein 1A (baz1a) of Xenopus laevis (African clawed frog).